The following is a 246-amino-acid chain: Chalcone--flavanone isomerase 1 (246 aa).

The substrate site is built by threonine 59, asparagine 124, and serine 201.

The protein belongs to the chalcone isomerase family. As to expression, mostly expressed in siliques and flowers, and, to a lower extent, in leaves.

The enzyme catalyses a chalcone = a flavanone.. It participates in secondary metabolite biosynthesis; flavonoid biosynthesis. In terms of biological role, catalyzes the intramolecular cyclization of bicyclic chalcones into tricyclic (S)-flavanones. Responsible for the isomerization of 4,2',4',6'-tetrahydroxychalcone (also termed chalcone) into naringenin. In Arabidopsis thaliana (Mouse-ear cress), this protein is Chalcone--flavanone isomerase 1 (CHI1).